Reading from the N-terminus, the 428-residue chain is MLDPKFLRNELEATAESLATRGFILDVERLSKLEEKRKSLQVATEELQASRNAISKSIGQAKAKGEDVAPIMAQVGDLGSQLDSKKAELAELLEELNAIALSVPNLPDASAPIGKDESENVEVRRWGTIKEYGFEVKDHVELGETLGGLDFKSAVKITGSRFIIMKGQIARMHRALAQFMLDLHTTEHGYTETYVPLLVNEDSLMGTGQLPKFGEDLFHTKPATEEGQGLSLIPTAEVPLTNIARDTIIDEAELPVKLTAHTPCFRSEAGSYGRDTRGLIRQHQFDKVELVQLVKPEDSMAALDALTGHAEKVLEKLGLPYRTVILCTGDMGFGSSKTFDIEVWLPAQNTYREISSCSNMQDFQARRMQARYKAADAKKPALLHTLNGSGLAVGRTLVAVLENYQNEDGSITVPEVLRPYMGGLEKIG.

235–237 (TAE) provides a ligand contact to L-serine. 266-268 (RSE) lines the ATP pocket. An L-serine-binding site is contributed by Glu-289. Residue 353 to 356 (EISS) coordinates ATP. Ser-389 is a binding site for L-serine.

Belongs to the class-II aminoacyl-tRNA synthetase family. Type-1 seryl-tRNA synthetase subfamily. Homodimer. The tRNA molecule binds across the dimer.

The protein resides in the cytoplasm. It catalyses the reaction tRNA(Ser) + L-serine + ATP = L-seryl-tRNA(Ser) + AMP + diphosphate + H(+). The catalysed reaction is tRNA(Sec) + L-serine + ATP = L-seryl-tRNA(Sec) + AMP + diphosphate + H(+). Its pathway is aminoacyl-tRNA biosynthesis; selenocysteinyl-tRNA(Sec) biosynthesis; L-seryl-tRNA(Sec) from L-serine and tRNA(Sec): step 1/1. Catalyzes the attachment of serine to tRNA(Ser). Is also able to aminoacylate tRNA(Sec) with serine, to form the misacylated tRNA L-seryl-tRNA(Sec), which will be further converted into selenocysteinyl-tRNA(Sec). This Shewanella woodyi (strain ATCC 51908 / MS32) protein is Serine--tRNA ligase.